Reading from the N-terminus, the 209-residue chain is Large ribosomal subunit protein uL3 (209 aa).

Belongs to the universal ribosomal protein uL3 family. In terms of assembly, part of the 50S ribosomal subunit. Forms a cluster with proteins L14 and L19.

One of the primary rRNA binding proteins, it binds directly near the 3'-end of the 23S rRNA, where it nucleates assembly of the 50S subunit. This chain is Large ribosomal subunit protein uL3, found in Carboxydothermus hydrogenoformans (strain ATCC BAA-161 / DSM 6008 / Z-2901).